Consider the following 254-residue polypeptide: Small ribosomal subunit protein uS2 (254 aa).

The protein belongs to the universal ribosomal protein uS2 family.

The protein is Small ribosomal subunit protein uS2 of Borrelia recurrentis (strain A1).